A 921-amino-acid chain; its full sequence is Isoleucine--tRNA ligase 1 (921 aa).

The 'HIGH' region signature appears at 57–67; sequence PYANGDIHMGH. An L-isoleucyl-5'-AMP-binding site is contributed by E552. Positions 593–597 match the 'KMSKS' region motif; that stretch reads KMSKS. K596 serves as a coordination point for ATP. Residues C888, C891, C908, and C911 each contribute to the Zn(2+) site.

Belongs to the class-I aminoacyl-tRNA synthetase family. IleS type 1 subfamily. In terms of assembly, monomer. Zn(2+) is required as a cofactor.

Its subcellular location is the cytoplasm. It catalyses the reaction tRNA(Ile) + L-isoleucine + ATP = L-isoleucyl-tRNA(Ile) + AMP + diphosphate. Catalyzes the attachment of isoleucine to tRNA(Ile). As IleRS can inadvertently accommodate and process structurally similar amino acids such as valine, to avoid such errors it has two additional distinct tRNA(Ile)-dependent editing activities. One activity is designated as 'pretransfer' editing and involves the hydrolysis of activated Val-AMP. The other activity is designated 'posttransfer' editing and involves deacylation of mischarged Val-tRNA(Ile). In Bacillus cereus (strain ZK / E33L), this protein is Isoleucine--tRNA ligase 1.